Consider the following 814-residue polypeptide: S-layer protein sap (814 aa).

Residues 1–29 (MAKTNSYKKVIAGTMTAAMVAGVVSPVAA) form the signal peptide. SLH domains follow at residues 30–93 (AGKT…DAKP), 94–150 (SFAD…KVNG), and 152–214 (PATK…AAKV). The 77-residue stretch at 403 to 479 (FTSKDFKQNN…TVKDSKGKEL (77 aa)) folds into the BIG2 domain.

Post-translationally, probably glycosylated.

It is found in the secreted. It localises to the cell wall. Its subcellular location is the S-layer. In terms of biological role, the S-layer is a paracrystalline mono-layered assembly of proteins which coat the surface of bacteria. In Bacillus anthracis, this protein is S-layer protein sap (sap).